The chain runs to 153 residues: Protein ElaA (153 aa).

The N-acetyltransferase domain maps to 7 to 151; sequence LHHSELSVSQ…PHIGMAREVI (145 aa).

The protein belongs to the UPF0039 (ElaA) family.

The chain is Protein ElaA (elaA) from Escherichia coli (strain K12).